The following is a 136-amino-acid chain: Large ribosomal subunit protein uL16c (136 aa).

The protein belongs to the universal ribosomal protein uL16 family. In terms of assembly, part of the 50S ribosomal subunit.

The protein resides in the plastid. The protein localises to the chloroplast. The polypeptide is Large ribosomal subunit protein uL16c (Chloranthus spicatus (Chulantree)).